A 521-amino-acid chain; its full sequence is Leucine-rich repeat-containing protein 24 (521 aa).

Residues 1 to 23 form the signal peptide; the sequence is MALRAPTLLLLLLGLLLLPLLPG. Positions 24 to 58 constitute an LRRNT domain; the sequence is LPPRATGCPAACRCYSATVECGALRLRVVPPGIPP. 6 LRR repeats span residues 59–80, 83–104, 107–128, 131–152, 155–176, and 179–200; these read GTQT…SLAP, ALRH…AFRA, RLLE…AFVG, QLRV…TFLH, RLQE…ALAG, and SLAL…ALQP. The N-linked (GlcNAc...) asparagine glycan is linked to Asn91. Positions 212 to 267 constitute an LRRCT domain; sequence NPWRCDCALHWLGSWIKEGGRRLLSSRDKKITCAEPPRLALQSLLEVSGGSLICIP. Positions 268–371 constitute an Ig-like C2-type domain; it reads PSVNVEPPEF…ARVPFHLLVN (104 aa). Cysteines 289 and 353 form a disulfide. The segment at 306–330 is disordered; it reads QPRDGKPQAQAQLEGGAPGLGGHGT. Residues Asn342 and Asn371 are each glycosylated (N-linked (GlcNAc...) asparagine). The interval 374-395 is disordered; it reads RQQSQQLPDPQAPATRPVGHEP. The chain crosses the membrane as a helical span at residues 414-434; sequence AITAAIALLALTALLLAAMIC.

The protein resides in the membrane. This chain is Leucine-rich repeat-containing protein 24 (Lrrc24), found in Mus musculus (Mouse).